The sequence spans 428 residues: Serine--tRNA ligase (428 aa).

235 to 237 (TAE) contributes to the L-serine binding site. Position 266–268 (266–268 (RSE)) interacts with ATP. Glutamate 289 is a binding site for L-serine. 353–356 (EISS) lines the ATP pocket. Serine 389 contacts L-serine.

Belongs to the class-II aminoacyl-tRNA synthetase family. Type-1 seryl-tRNA synthetase subfamily. Homodimer. The tRNA molecule binds across the dimer.

The protein localises to the cytoplasm. The catalysed reaction is tRNA(Ser) + L-serine + ATP = L-seryl-tRNA(Ser) + AMP + diphosphate + H(+). The enzyme catalyses tRNA(Sec) + L-serine + ATP = L-seryl-tRNA(Sec) + AMP + diphosphate + H(+). It participates in aminoacyl-tRNA biosynthesis; selenocysteinyl-tRNA(Sec) biosynthesis; L-seryl-tRNA(Sec) from L-serine and tRNA(Sec): step 1/1. Its function is as follows. Catalyzes the attachment of serine to tRNA(Ser). Is also able to aminoacylate tRNA(Sec) with serine, to form the misacylated tRNA L-seryl-tRNA(Sec), which will be further converted into selenocysteinyl-tRNA(Sec). The protein is Serine--tRNA ligase of Shewanella sp. (strain ANA-3).